Reading from the N-terminus, the 406-residue chain is MTFSVDKVRADFPVLSREVNGLPLAYLDSAASAQKPSQVIDAEAEFYRHGYAAVHRGIHTLSAQATEKMENVRKRASLFINARSAEELVFVRGTTEGINLVANSWGNSNVRAGDNIIISQMEHHANIVPWQMLCARVGAELRVIPLNPDGTLQLETLPTLFDEKTRLLAITHVSNVLGTENPLAEIITLAHQHGAKVLVDGAQAVMHHPVDVQALDCDFYVFSGHKLYGPTGIGILYVKEALLQEMPPWEGGGSMIATVSLSEGTTWTKAPWRFEAGTPNTGGIIGLGAALEYVSALGLNNIAEYEQNLMHYALSQLESVPDLTLYGPQNRLGVIAFNLGKHHAYDVGSFLDNYGIAVRTGHHCAMPLMAYYNVPAMCRASLAMYNTHEEVDRLVTGLQRIHRLLG.

N6-(pyridoxal phosphate)lysine is present on K226. Catalysis depends on C364, which acts as the Cysteine persulfide intermediate.

It belongs to the class-V pyridoxal-phosphate-dependent aminotransferase family. Csd subfamily. Homodimer. Interacts with SufE and the SufBCD complex composed of SufB, SufC and SufD. The interaction with SufE is required to mediate the direct transfer of the sulfur atom from the S-sulfanylcysteine. Requires pyridoxal 5'-phosphate as cofactor.

Its subcellular location is the cytoplasm. It carries out the reaction (sulfur carrier)-H + L-cysteine = (sulfur carrier)-SH + L-alanine. The catalysed reaction is L-selenocysteine + AH2 = hydrogenselenide + L-alanine + A + H(+). It participates in cofactor biosynthesis; iron-sulfur cluster biosynthesis. In terms of biological role, cysteine desulfurases mobilize the sulfur from L-cysteine to yield L-alanine, an essential step in sulfur metabolism for biosynthesis of a variety of sulfur-containing biomolecules. Component of the suf operon, which is activated and required under specific conditions such as oxidative stress and iron limitation. Acts as a potent selenocysteine lyase in vitro, that mobilizes selenium from L-selenocysteine. Selenocysteine lyase activity is however unsure in vivo. This chain is Cysteine desulfurase, found in Shigella sonnei (strain Ss046).